The primary structure comprises 533 residues: Probable dolichyl pyrophosphate Man9GlcNAc2 alpha-1,3-glucosyltransferase (533 aa).

Positions 1–20 (MPKKKPAKHSGEDDITIPVS) are disordered. Transmembrane regions (helical) follow at residues 42–64 (FLCI…YSGA), 149–169 (WTVL…FVLV), 184–204 (WHIA…GHFQ), 214–234 (VGAI…LFSL), 264–284 (ILSV…FWWP), 360–380 (GFLY…FQVH), 422–442 (LLIP…SPGN), 463–483 (VFLL…YLTI), and 491–511 (FLFE…FAFY).

This sequence belongs to the ALG6/ALG8 glucosyltransferase family.

The protein resides in the endoplasmic reticulum membrane. The enzyme catalyses an alpha-D-Man-(1-&gt;2)-alpha-D-Man-(1-&gt;2)-alpha-D-Man-(1-&gt;3)-[alpha-D-Man-(1-&gt;2)-alpha-D-Man-(1-&gt;3)-[alpha-D-Man-(1-&gt;2)-alpha-D-Man-(1-&gt;6)]-alpha-D-Man-(1-&gt;6)]-beta-D-Man-(1-&gt;4)-beta-D-GlcNAc-(1-&gt;4)-alpha-D-GlcNAc-diphospho-di-trans,poly-cis-dolichol + a di-trans,poly-cis-dolichyl beta-D-glucosyl phosphate = an alpha-D-Glc-(1-&gt;3)-alpha-D-Man-(1-&gt;2)-alpha-D-Man-(1-&gt;2)-alpha-D-Man-(1-&gt;3)-[alpha-D-Man-(1-&gt;2)-alpha-D-Man-(1-&gt;3)-[alpha-D-Man-(1-&gt;2)-alpha-D-Man-(1-&gt;6)]-alpha-D-Man-(1-&gt;6)]-beta-D-Man-(1-&gt;4)-beta-D-GlcNAc-(1-&gt;4)-alpha-D-GlcNAc-diphospho-di-trans,poly-cis-dolichol + a di-trans,poly-cis-dolichyl phosphate + H(+). The protein operates within protein modification; protein glycosylation. Its function is as follows. Adds the first glucose residue to the lipid-linked oligosaccharide precursor for N-linked glycosylation. Transfers glucose from dolichyl phosphate glucose (Dol-P-Glc) onto the lipid-linked oligosaccharide Man(9)GlcNAc(2)-PP-Dol. In Arabidopsis thaliana (Mouse-ear cress), this protein is Probable dolichyl pyrophosphate Man9GlcNAc2 alpha-1,3-glucosyltransferase.